An 860-amino-acid polypeptide reads, in one-letter code: Leucine--tRNA ligase (860 aa).

The short motif at 42–52 (PYPSGRLHMGH) is the 'HIGH' region element. A 'KMSKS' region motif is present at residues 619–623 (KMSKS). Residue K622 coordinates ATP.

Belongs to the class-I aminoacyl-tRNA synthetase family.

The protein resides in the cytoplasm. It catalyses the reaction tRNA(Leu) + L-leucine + ATP = L-leucyl-tRNA(Leu) + AMP + diphosphate. The sequence is that of Leucine--tRNA ligase from Escherichia coli O157:H7.